The following is a 367-amino-acid chain: Ribosome-binding ATPase YchF (367 aa).

In terms of domain architecture, OBG-type G spans 2-258 (LSAGIVGLPN…LKLEQRQYFL (257 aa)). 11-16 (NVGKST) contributes to the ATP binding site. The Mg(2+) site is built by serine 15 and threonine 35. Residues 281-364 (NLWSFFTFGK…KDGDVCNFKF (84 aa)) form the TGS domain.

The protein belongs to the TRAFAC class OBG-HflX-like GTPase superfamily. OBG GTPase family. YchF/OLA1 subfamily. Mg(2+) serves as cofactor.

ATPase that binds to both the 70S ribosome and the 50S ribosomal subunit in a nucleotide-independent manner. The protein is Ribosome-binding ATPase YchF of Mycoplasma genitalium (strain ATCC 33530 / DSM 19775 / NCTC 10195 / G37) (Mycoplasmoides genitalium).